The sequence spans 571 residues: Isocitrate dehydrogenase kinase/phosphatase 2 (571 aa).

ATP contacts are provided by residues A313 to M319 and K334. D369 is a catalytic residue.

Belongs to the AceK family.

It localises to the cytoplasm. The catalysed reaction is L-seryl-[isocitrate dehydrogenase] + ATP = O-phospho-L-seryl-[isocitrate dehydrogenase] + ADP + H(+). Functionally, bifunctional enzyme which can phosphorylate or dephosphorylate isocitrate dehydrogenase (IDH) on a specific serine residue. This is a regulatory mechanism which enables bacteria to bypass the Krebs cycle via the glyoxylate shunt in response to the source of carbon. When bacteria are grown on glucose, IDH is fully active and unphosphorylated, but when grown on acetate or ethanol, the activity of IDH declines drastically concomitant with its phosphorylation. The protein is Isocitrate dehydrogenase kinase/phosphatase 2 of Pseudoalteromonas translucida (strain TAC 125).